The sequence spans 273 residues: Homeobox protein HMX2 (273 aa).

A disordered region spans residues 1–152 (MGSKEDAGKG…RQAGAAKKKT (152 aa)). Positions 93–102 (KGSGGSGPGG) are enriched in gly residues. The span at 114 to 123 (SDFKEEKERL) shows a compositional bias: basic and acidic residues. Residues 149-208 (KKKTRTVFSRSQVYQLESTFDMKRYLSSSERACLASSLQLTETQVKTWFQNRRNKWKRQL) constitute a DNA-binding region (homeobox).

This sequence belongs to the HMX homeobox family.

Its subcellular location is the nucleus. Transcription factor involved in specification of neuronal cell types and which is required for inner ear and hypothalamus development. This is Homeobox protein HMX2 (HMX2) from Homo sapiens (Human).